A 141-amino-acid polypeptide reads, in one-letter code: Large ribosomal subunit protein uL11 (141 aa).

Belongs to the universal ribosomal protein uL11 family. In terms of assembly, part of the ribosomal stalk of the 50S ribosomal subunit. Interacts with L10 and the large rRNA to form the base of the stalk. L10 forms an elongated spine to which L12 dimers bind in a sequential fashion forming a multimeric L10(L12)X complex. One or more lysine residues are methylated.

Functionally, forms part of the ribosomal stalk which helps the ribosome interact with GTP-bound translation factors. The chain is Large ribosomal subunit protein uL11 from Clostridium botulinum (strain Alaska E43 / Type E3).